A 527-amino-acid polypeptide reads, in one-letter code: Tetanolysin (527 aa).

The signal sequence occupies residues 1 to 32; sequence MNKNVLKFVSRSLLIFSMTGLISNYNSSNVLA. A run of 4 beta stranded transmembrane segments spans residues 215–228, 235–244, 313–322, and 330–342; these read QSQLSAAVGCNFKA, IDFDSIFKGE, SSHVKAAFKA, and SSNAEYKDILNQS. The Conserved undecapeptide signature appears at 484–494; that stretch reads ECTGLAWEWWR. Residues 516 to 517 carry the Cholesterol binding motif; it reads TL.

It belongs to the cholesterol-dependent cytolysin family. As to quaternary structure, homooligomeric pore complex containing 35-50 subunits; when inserted in the host membrane. In terms of processing, purified 48 and 53 kDa proteins with 4 different pIs (6.1, 5.6, 5.3 and 6.6) in decreasing order of activity.

Its subcellular location is the secreted. It localises to the host cell membrane. Its activity is regulated as follows. Cytolysis of host cells is inhibited by cholesterol. In terms of biological role, a cholesterol-dependent toxin that causes cytolysis by forming pores in cholesterol-containing host membranes. After binding to target membranes, the protein undergoes a major conformation change, leading to its insertion in the host membrane and formation of an oligomeric pore complex. Cholesterol is required for binding to host membranes, membrane insertion and pore formation; cholesterol binding is mediated by a Thr-Leu pair in the C-terminus. This is Tetanolysin from Clostridium tetani (strain Massachusetts / E88).